The sequence spans 203 residues: Recombination protein RecR (203 aa).

The C4-type zinc finger occupies 56 to 71 (CAVCGNVSDNERCRIC). Residues 79-179 (SVVCIVEEPK…TVTRIASGLP (101 aa)) enclose the Toprim domain.

Belongs to the RecR family.

Its function is as follows. May play a role in DNA repair. It seems to be involved in an RecBC-independent recombinational process of DNA repair. It may act with RecF and RecO. The chain is Recombination protein RecR from Mycobacterium bovis (strain ATCC BAA-935 / AF2122/97).